The following is a 117-amino-acid chain: Biofilm growth-associated repressor (117 aa).

In terms of domain architecture, HTH arsR-type spans 20 to 114 (AMEKRATEVA…ALYAIFCAPE (95 aa)). Residues 54–77 (VGELEAKLDIRQPTLSQQLGVLRE) constitute a DNA-binding region (H-T-H motif).

In terms of biological role, represses an operon that comprises at least itself and blh. Binds to a palindromic AT-rich sequence spanning the -10 region of the blh promoter and blocks transcription of the operon. This Agrobacterium fabrum (strain C58 / ATCC 33970) (Agrobacterium tumefaciens (strain C58)) protein is Biofilm growth-associated repressor (bigR).